Here is a 129-residue protein sequence, read N- to C-terminus: Glycine cleavage system H protein (129 aa).

The region spanning 24–106 is the Lipoyl-binding domain; that stretch reads IATIGISAFA…YGEGWLVKVR (83 aa). N6-lipoyllysine is present on lysine 65.

It belongs to the GcvH family. As to quaternary structure, the glycine cleavage system is composed of four proteins: P, T, L and H. The cofactor is (R)-lipoate.

Its function is as follows. The glycine cleavage system catalyzes the degradation of glycine. The H protein shuttles the methylamine group of glycine from the P protein to the T protein. The protein is Glycine cleavage system H protein of Cyanothece sp. (strain PCC 7425 / ATCC 29141).